The chain runs to 873 residues: Zinc fingers and homeoboxes protein 1 (873 aa).

Residues 1–63 (MASRRKSTTP…ESVDSDNQQN (63 aa)) form a disordered region. The span at 18-30 (QDPDLELISDLDE) shows a compositional bias: acidic residues. T36 carries the phosphothreonine modification. Residues S45, S47, and S48 each carry the phosphoserine modification. 2 C2H2-type zinc fingers span residues 70–93 (YECK…DSEH) and 102–125 (YVCV…LKYH). K159 participates in a covalent cross-link: Glycyl lysine isopeptide (Lys-Gly) (interchain with G-Cter in SUMO2). At S202 the chain carries Phosphoserine. The tract at residues 202–236 (SVEDVPEEKENEIKPDREEIVENPSSSASESNTST) is disordered. Over residues 212 to 221 (NEIKPDREEI) the composition is skewed to basic and acidic residues. Residues 223–236 (ENPSSSASESNTST) are compositionally biased toward low complexity. Residues 272–432 (NSNLIPKVLI…QNNVQKSQVP (161 aa)) form a required for dimerization region. Residues 272–564 (NSNLIPKVLI…AQPKQSWNPF (293 aa)) form a required for interaction with NFYA region. Positions 284–346 (NSIPTYNAAL…LKHGVSWTPE (63 aa)) form a DNA-binding region, homeobox 1. Residues K441, K454, K485, and K629 each participate in a glycyl lysine isopeptide (Lys-Gly) (interchain with G-Cter in SUMO2) cross-link. 2 consecutive DNA-binding regions (homeobox) follow at residues 464-526 (SFGI…KSNQ) and 569-630 (PQKF…EEKM). Disordered regions lie at residues 626–667 (KEEK…ICKK) and 732–769 (SSMN…INNW). A Phosphoserine modification is found at S648. The segment at residues 660–722 (STGKICKKTP…YAWKNGNLKW (63 aa)) is a DNA-binding region (homeobox 4). A required for nuclear localization region spans residues 734-768 (MNGLSSLRKRGRGRPKGRGRGRPRGRPRGSKRINN). A compositionally biased stretch (basic residues) spans 740-764 (LRKRGRGRPKGRGRGRPRGRPRGSK). S774 is subject to Phosphoserine. The segment at residues 777 to 832 (KFKTGTAILKDYYLKHKFLNEQDLDELVNKSHMGYEQVREWFAERQRRSELGIELF) is a DNA-binding region (homeobox 5). The segment at 829 to 873 (IELFEENEEEDEVIDDQEEDEEETDDSDTWEPPRHVKRKLSKSDD) is disordered. Residues 831–857 (LFEENEEEDEVIDDQEEDEEETDDSDT) are compositionally biased toward acidic residues. The required for repressor activity stretch occupies residues 831–873 (LFEENEEEDEVIDDQEEDEEETDDSDTWEPPRHVKRKLSKSDD). The span at 863-873 (HVKRKLSKSDD) shows a compositional bias: basic residues.

The protein belongs to the ZHX family. As to quaternary structure, forms homodimers. Also forms heterodimers with ZHX3 which is a prerequisite for repressor activity and with ZHX2. Interacts with NFYA. Interacts with ATF7IP.

Its subcellular location is the nucleus. Functionally, acts as a transcriptional repressor. This is Zinc fingers and homeoboxes protein 1 (ZHX1) from Gorilla gorilla gorilla (Western lowland gorilla).